We begin with the raw amino-acid sequence, 193 residues long: Intracellular heme transport protein HutX (193 aa).

Residue Tyr116 participates in heme binding.

In terms of assembly, homodimer. Interacts with HutZ.

It localises to the cytoplasm. Binds heme. Heme is transferred to the heme-degrading enzyme HutZ via a specific protein-protein interaction. This Vibrio cholerae serotype O1 (strain ATCC 39315 / El Tor Inaba N16961) protein is Intracellular heme transport protein HutX.